Consider the following 237-residue polypeptide: Ribonuclease PH (237 aa).

Residues arginine 86 and 124–126 (GTR) contribute to the phosphate site.

This sequence belongs to the RNase PH family. Homohexameric ring arranged as a trimer of dimers.

The catalysed reaction is tRNA(n+1) + phosphate = tRNA(n) + a ribonucleoside 5'-diphosphate. Phosphorolytic 3'-5' exoribonuclease that plays an important role in tRNA 3'-end maturation. Removes nucleotide residues following the 3'-CCA terminus of tRNAs; can also add nucleotides to the ends of RNA molecules by using nucleoside diphosphates as substrates, but this may not be physiologically important. Probably plays a role in initiation of 16S rRNA degradation (leading to ribosome degradation) during starvation. This Erythrobacter litoralis (strain HTCC2594) protein is Ribonuclease PH.